Here is a 336-residue protein sequence, read N- to C-terminus: Terephthalate 1,2-dioxygenase, reductase component 2 (336 aa).

The 2Fe-2S ferredoxin-type domain maps to 3 to 91; sequence HQIHIHDSDI…DIRIHPSSFR (89 aa). 4 residues coordinate [2Fe-2S] cluster: Cys37, Cys42, Cys45, and Cys75. An FAD-binding FR-type domain is found at 98-197; it reads RKRFTAKVYS…ELPFGSIALK (100 aa).

In terms of assembly, monomer. Part of a multicomponent enzyme system composed of a reductase (TphA1I or TphA1II) and a two-subunit oxygenase component (TphA2I or TphA2II and TphA3I or TphA3II). It depends on FAD as a cofactor. [2Fe-2S] cluster is required as a cofactor.

The enzyme catalyses terephthalate + NADH + O2 + H(+) = (3S,4R)-3,4-dihydroxycyclohexa-1,5-diene-1,4-dicarboxylate + NAD(+). Functionally, component of the terephthalate 1,2-dioxygenase multicomponent enzyme system which catalyzes the dioxygenation of terephthalate (TER/TPA) to 1,2-dihydroxy-3,5-cyclohexadiene-1,4-dicarboxylic acid (DCD). TphA1 probably reduces TphA2A3. It can also use 2,5-dicarboxypyridine (PDC) and 1,4-napthalenedicarboxylic acid (NDC) as substrates, and preferentially uses NADPH which is the physiological electron donor. This chain is Terephthalate 1,2-dioxygenase, reductase component 2 (tphA1II), found in Comamonas sp.